A 350-amino-acid polypeptide reads, in one-letter code: Ion-translocating oxidoreductase complex subunit D (350 aa).

3 helical membrane passes run 25–45 (ALCL…GSLI), 89–109 (IPPL…IIIV), and 124–144 (AMAG…SWVA). FMN phosphoryl threonine is present on Thr-185. Helical transmembrane passes span 212 to 232 (SYGV…LVLL), 239 to 259 (WHIS…GFLI), 265 to 285 (VSPL…FIAT), 298 to 318 (LIFG…GGYP), and 319 to 339 (DAVA…DHYV).

This sequence belongs to the NqrB/RnfD family. In terms of assembly, the complex is composed of six subunits: RnfA, RnfB, RnfC, RnfD, RnfE and RnfG. FMN is required as a cofactor.

It is found in the cell inner membrane. Its function is as follows. Part of a membrane-bound complex that couples electron transfer with translocation of ions across the membrane. The protein is Ion-translocating oxidoreductase complex subunit D of Shewanella denitrificans (strain OS217 / ATCC BAA-1090 / DSM 15013).